The primary structure comprises 101 residues: Ribonuclease P protein component 1 (101 aa).

This sequence belongs to the eukaryotic/archaeal RNase P protein component 1 family. In terms of assembly, consists of a catalytic RNA component and at least 4-5 protein subunits.

Its subcellular location is the cytoplasm. The enzyme catalyses Endonucleolytic cleavage of RNA, removing 5'-extranucleotides from tRNA precursor.. Part of ribonuclease P, a protein complex that generates mature tRNA molecules by cleaving their 5'-ends. The chain is Ribonuclease P protein component 1 from Methanococcoides burtonii (strain DSM 6242 / NBRC 107633 / OCM 468 / ACE-M).